Consider the following 342-residue polypeptide: MITMIYKGNRAAWAYIVARTKVMKSRLLKPEDFRKLLNMEFDEIVRYIGETEYKKEIDELGYKFTGPRLLDHALYANLARTYRKLIEVSFGASKFLIMKYLEKWDVWNIINIIRGKMANVQPEVVDDILVPAGERDMDFWKTLLVKDIEEIVKSFEGTPYYEPLSKIGSEDMSKIEDGLYKVYYRELLKLNPSDFAMKLFLDFIKMEIDIRNVKTLLRLKAEDATPDEIMECTIPGGYELTEEELRKLAAMPIDEMIKALEGYWFWNDVQIEGKEVAAVEIEFDKVWIKTISKRASNYPLSILPVLQYIVLKKVEVDNLRVLGWGKYYGLPSEEIERQMVIL.

It belongs to the V-ATPase V0D/AC39 subunit family. In terms of assembly, has multiple subunits with at least A(3), B(3), C, D, E, F, H, I and proteolipid K(x).

It localises to the cell membrane. In terms of biological role, component of the A-type ATP synthase that produces ATP from ADP in the presence of a proton gradient across the membrane. The polypeptide is A-type ATP synthase subunit C (Archaeoglobus fulgidus (strain ATCC 49558 / DSM 4304 / JCM 9628 / NBRC 100126 / VC-16)).